The following is a 180-amino-acid chain: MKSIYFVAGLFVMLVQGSWQHPLQDTEEKPRSFSTSQTDLLDDPDQMNEDKRHSQGTFTSDYSKFLDTRRAQDFLDWLKNTKRNRNEIAKRHDEFERHAEGTFTSDVSSYLEGQAAKEFIAWLVKGRGRRDFPEEVTIVEELRRRHADGSFSDEMNTVLDHLATKDFINWLIQTKITDRK.

The signal sequence occupies residues 1–20; sequence MKSIYFVAGLFVMLVQGSWQ. Residues 23 to 56 are disordered; the sequence is LQDTEEKPRSFSTSQTDLLDDPDQMNEDKRHSQG. Phosphoserine is present on serine 54. Residues 84–89 constitute a propeptide that is removed on maturation; the sequence is NRNEIA. Residues serine 105 and serine 108 each carry the phosphoserine modification. Arginine 127 carries the arginine amide modification. The propeptide occupies 131 to 145; it reads DFPEEVTIVEELRRR. Residues serine 150 and serine 152 each carry the phosphoserine modification.

Belongs to the glucagon family. In terms of processing, proglucagon is post-translationally processed in a tissue-specific manner in pancreatic A cells and intestinal L cells. In pancreatic A cells, the major bioactive hormone is glucagon cleaved by PCSK2/PC2. In the intestinal L cells PCSK1/PC1 liberates GLP-1, GLP-2, glicentin and oxyntomodulin. GLP-1 is further N-terminally truncated by post-translational processing in the intestinal L cells resulting in GLP-1(7-37) GLP-1-(7-36)amide. The C-terminal amidation is neither important for the metabolism of GLP-1 nor for its effects on the endocrine pancreas. Glucagon is secreted in the A cells of the islets of Langerhans. GLP-1, GLP-2, oxyntomodulin and glicentin are secreted from enteroendocrine cells throughout the gastrointestinal tract. GLP-1 and GLP-2 are also secreted in selected neurons in the brain.

It is found in the secreted. Functionally, plays a key role in glucose metabolism and homeostasis. Regulates blood glucose by increasing gluconeogenesis and decreasing glycolysis. A counterregulatory hormone of insulin, raises plasma glucose levels in response to insulin-induced hypoglycemia. Plays an important role in initiating and maintaining hyperglycemic conditions in diabetes. Its function is as follows. Potent stimulator of glucose-dependent insulin release. Also stimulates insulin release in response to IL6. Plays important roles on gastric motility and the suppression of plasma glucagon levels. May be involved in the suppression of satiety and stimulation of glucose disposal in peripheral tissues, independent of the actions of insulin. Has growth-promoting activities on intestinal epithelium. May also regulate the hypothalamic pituitary axis (HPA) via effects on LH, TSH, CRH, oxytocin, and vasopressin secretion. Increases islet mass through stimulation of islet neogenesis and pancreatic beta cell proliferation. Inhibits beta cell apoptosis. In terms of biological role, stimulates intestinal growth and up-regulates villus height in the small intestine, concomitant with increased crypt cell proliferation and decreased enterocyte apoptosis. The gastrointestinal tract, from the stomach to the colon is the principal target for GLP-2 action. Plays a key role in nutrient homeostasis, enhancing nutrient assimilation through enhanced gastrointestinal function, as well as increasing nutrient disposal. Stimulates intestinal glucose transport and decreases mucosal permeability. Significantly reduces food intake. Inhibits gastric emptying in humans. Suppression of gastric emptying may lead to increased gastric distension, which may contribute to satiety by causing a sensation of fullness. Functionally, may modulate gastric acid secretion and the gastro-pyloro-duodenal activity. May play an important role in intestinal mucosal growth in the early period of life. The protein is Pro-glucagon (GCG) of Octodon degus (Degu).